Consider the following 358-residue polypeptide: Methylthioribose-1-phosphate isomerase (358 aa).

Substrate-binding positions include 54-56 (CGA) and Q205. Residue D246 is the Proton donor of the active site. 256–257 (NQ) is a binding site for substrate.

This sequence belongs to the eIF-2B alpha/beta/delta subunits family. MtnA subfamily.

It carries out the reaction 5-(methylsulfanyl)-alpha-D-ribose 1-phosphate = 5-(methylsulfanyl)-D-ribulose 1-phosphate. It functions in the pathway amino-acid biosynthesis; L-methionine biosynthesis via salvage pathway; L-methionine from S-methyl-5-thio-alpha-D-ribose 1-phosphate: step 1/6. Functionally, catalyzes the interconversion of methylthioribose-1-phosphate (MTR-1-P) into methylthioribulose-1-phosphate (MTRu-1-P). This is Methylthioribose-1-phosphate isomerase from Pseudomonas fluorescens (strain ATCC BAA-477 / NRRL B-23932 / Pf-5).